A 342-amino-acid chain; its full sequence is tRNA-specific 2-thiouridylase MnmA (342 aa).

ATP-binding positions include 6–13 (LLSGGVDS) and L32. C92 (nucleophile) is an active-site residue. Cysteines 92 and 191 form a disulfide. G116 contributes to the ATP binding site. The tract at residues 138–140 (KDQ) is interaction with tRNA. The active-site Cysteine persulfide intermediate is C191. The segment at 293–294 (RY) is interaction with tRNA.

This sequence belongs to the MnmA/TRMU family.

It is found in the cytoplasm. The catalysed reaction is S-sulfanyl-L-cysteinyl-[protein] + uridine(34) in tRNA + AH2 + ATP = 2-thiouridine(34) in tRNA + L-cysteinyl-[protein] + A + AMP + diphosphate + H(+). In terms of biological role, catalyzes the 2-thiolation of uridine at the wobble position (U34) of tRNA, leading to the formation of s(2)U34. The protein is tRNA-specific 2-thiouridylase MnmA of Helicobacter pylori (strain HPAG1).